The following is a 325-amino-acid chain: Reaction center protein M chain (325 aa).

Helical transmembrane passes span 53–79 (LGFT…LASV), 111–140 (EGGW…AEAL), and 143–168 (SQHL…PVMM). (7R,8Z)-bacteriochlorophyll b contacts are provided by His182 and His202. A helical transmembrane segment spans residues 198–226 (YNPFHMLSIAFLYGSALLFAMHGATILAV). Positions 219 and 234 each coordinate Fe cation. Trp252 lines the a ubiquinone pocket. Fe cation is bound at residue His266.

The protein belongs to the reaction center PufL/M/PsbA/D family. As to quaternary structure, reaction center is composed of four bacteriochlorophylls, two bacteriopheophytins, two ubiquinones, one iron, and two highly hydrophobic polypeptide chains (designated L and M).

Its subcellular location is the cellular chromatophore membrane. The reaction center is a membrane-bound complex that mediates the initial photochemical event in the electron transfer process of photosynthesis. In Allochromatium vinosum (strain ATCC 17899 / DSM 180 / NBRC 103801 / NCIMB 10441 / D) (Chromatium vinosum), this protein is Reaction center protein M chain (pufM).